Reading from the N-terminus, the 313-residue chain is Pyrimidine-specific ribonucleoside hydrolase RihB (313 aa).

Aspartate 11 (proton acceptor) is an active-site residue. The Ca(2+) site is built by aspartate 11, aspartate 16, and valine 124. Substrate is bound by residues glutamine 227 and histidine 239. Residue aspartate 240 coordinates Ca(2+).

It belongs to the IUNH family. RihB subfamily. In terms of assembly, homotetramer. Ca(2+) is required as a cofactor.

It carries out the reaction a pyrimidine ribonucleoside + H2O = a pyrimidine nucleobase + D-ribose. In terms of biological role, hydrolyzes cytidine or uridine to ribose and cytosine or uracil, respectively. Has a clear preference for cytidine over uridine. Strictly specific for ribonucleosides. This Escherichia coli O1:K1 / APEC protein is Pyrimidine-specific ribonucleoside hydrolase RihB.